A 205-amino-acid polypeptide reads, in one-letter code: 3-demethoxyubiquinol 3-hydroxylase (205 aa).

Fe cation is bound by residues Glu54, Glu84, His87, Glu136, Glu168, and His171.

This sequence belongs to the COQ7 family. Requires Fe cation as cofactor.

The protein resides in the cell membrane. It catalyses the reaction a 5-methoxy-2-methyl-3-(all-trans-polyprenyl)benzene-1,4-diol + AH2 + O2 = a 3-demethylubiquinol + A + H2O. It participates in cofactor biosynthesis; ubiquinone biosynthesis. Functionally, catalyzes the hydroxylation of 2-nonaprenyl-3-methyl-6-methoxy-1,4-benzoquinol during ubiquinone biosynthesis. The sequence is that of 3-demethoxyubiquinol 3-hydroxylase from Acidovorax sp. (strain JS42).